We begin with the raw amino-acid sequence, 141 residues long: Hemoglobin subunit beta-C(NA) (141 aa).

The 141-residue stretch at Pro-1–His-141 folds into the Globin domain. The heme b site is built by His-58 and His-87.

This sequence belongs to the globin family. As to quaternary structure, heterotetramer of two alpha chains and two beta chains. As to expression, red blood cells.

In terms of biological role, involved in oxygen transport from the lung to the various peripheral tissues. The chain is Hemoglobin subunit beta-C(NA) from Ammotragus lervia (Barbary sheep).